The primary structure comprises 196 residues: Ras-related protein RabC (196 aa).

13–20 (GESGVGKS) provides a ligand contact to GTP. Positions 35–43 (FAPTLGVDF) match the Effector region motif. Residues 63–67 (DTAGQ) and 121–124 (NKSD) each bind GTP. Residues C195 and C196 are each lipidated (S-geranylgeranyl cysteine).

It belongs to the small GTPase superfamily. Rab family.

The protein resides in the cell membrane. The sequence is that of Ras-related protein RabC (rabC) from Dictyostelium discoideum (Social amoeba).